A 502-amino-acid chain; its full sequence is Glycerol kinase (502 aa).

ADP is bound at residue threonine 13. 3 residues coordinate ATP: threonine 13, threonine 14, and serine 15. Residue threonine 13 participates in sn-glycerol 3-phosphate binding. Arginine 17 contacts ADP. Sn-glycerol 3-phosphate is bound by residues arginine 83, glutamate 84, tyrosine 135, and aspartate 245. The glycerol site is built by arginine 83, glutamate 84, tyrosine 135, aspartate 245, and glutamine 246. Threonine 267 and glycine 310 together coordinate ADP. ATP-binding residues include threonine 267, glycine 310, glutamine 314, and glycine 411. ADP-binding residues include glycine 411 and asparagine 415.

This sequence belongs to the FGGY kinase family. As to quaternary structure, homotetramer and homodimer (in equilibrium).

It carries out the reaction glycerol + ATP = sn-glycerol 3-phosphate + ADP + H(+). It participates in polyol metabolism; glycerol degradation via glycerol kinase pathway; sn-glycerol 3-phosphate from glycerol: step 1/1. With respect to regulation, activated by phosphorylation and inhibited by fructose 1,6-bisphosphate (FBP). In terms of biological role, key enzyme in the regulation of glycerol uptake and metabolism. Catalyzes the phosphorylation of glycerol to yield sn-glycerol 3-phosphate. The chain is Glycerol kinase from Lactobacillus delbrueckii subsp. bulgaricus (strain ATCC BAA-365 / Lb-18).